Consider the following 165-residue polypeptide: MVFITKFARIGLQAARQLSVTPLGAVQARAIHLTSLLAKERRYTNKHEWVEVVSGSNAIVGISSYAQEALGDVVFAQLPEPGTELKQDDECGALESVKAASEVYSPVSGKVIEKNAEVEDTPALVNSSCYEKGWLFKVDLKNPKELEALMTEDQYKAFLSSSGDH.

The region spanning 57–139 (NAIVGISSYA…YEKGWLFKVD (83 aa)) is the Lipoyl-binding domain. N6-lipoyllysine is present on lysine 98.

Belongs to the GcvH family. The glycine cleavage system is composed of four proteins: P, T, L and H. (R)-lipoate serves as cofactor.

It localises to the mitochondrion. The glycine cleavage system catalyzes the degradation of glycine. The H protein shuttles the methylamine group of glycine from the P protein to the T protein. The protein is Glycine cleavage system H protein, mitochondrial (ppl) of Drosophila melanogaster (Fruit fly).